The following is a 116-amino-acid chain: Methionine-R-sulfoxide reductase B1 (116 aa).

Residues 1–106 (MSFCSFFGGE…FSSSLKFVPK (106 aa)) enclose the MsrB domain. Zn(2+) contacts are provided by cysteine 23, cysteine 26, cysteine 71, and cysteine 74. The active-site Nucleophile is the selenocysteine 95. Selenocysteine 95 is a non-standard amino acid (selenocysteine).

This sequence belongs to the MsrB Met sulfoxide reductase family. It depends on Zn(2+) as a cofactor. In terms of processing, truncated MSRB1/SEPX1 proteins produced by failed UGA/Sec decoding are ubiquitinated by the CRL2(FEM1C) E3 ubiquitin-protein ligase complex.

Its subcellular location is the cytoplasm. It localises to the nucleus. The protein localises to the cytoskeleton. It catalyses the reaction L-methionyl-[protein] + [thioredoxin]-disulfide + H2O = L-methionyl-(R)-S-oxide-[protein] + [thioredoxin]-dithiol. It carries out the reaction [thioredoxin]-disulfide + L-methionine + H2O = L-methionine (R)-S-oxide + [thioredoxin]-dithiol. Its function is as follows. Methionine-sulfoxide reductase that specifically reduces methionine (R)-sulfoxide back to methionine. While in many cases, methionine oxidation is the result of random oxidation following oxidative stress, methionine oxidation is also a post-translational modification that takes place on specific residue. Acts as a regulator of actin assembly by reducing methionine (R)-sulfoxide mediated by MICALs (MICAL1, MICAL2 or MICAL3) on actin, thereby promoting filament repolymerization. Plays a role in innate immunity by reducing oxidized actin, leading to actin repolymerization in macrophages. The polypeptide is Methionine-R-sulfoxide reductase B1 (Msrb1) (Mus musculus (Mouse)).